The following is a 313-amino-acid chain: Porphobilinogen deaminase (313 aa).

C249 is subject to S-(dipyrrolylmethanemethyl)cysteine.

Belongs to the HMBS family. Monomer. Requires dipyrromethane as cofactor.

It catalyses the reaction 4 porphobilinogen + H2O = hydroxymethylbilane + 4 NH4(+). It participates in porphyrin-containing compound metabolism; protoporphyrin-IX biosynthesis; coproporphyrinogen-III from 5-aminolevulinate: step 2/4. Its function is as follows. Tetrapolymerization of the monopyrrole PBG into the hydroxymethylbilane pre-uroporphyrinogen in several discrete steps. The chain is Porphobilinogen deaminase from Paracoccus denitrificans (strain Pd 1222).